A 784-amino-acid chain; its full sequence is Toll-like receptor 2 (784 aa).

The first 20 residues, 1-20 (MPHALWTVWVLGAVISLSKE), serve as a signal peptide directing secretion. Residues 21 to 587 (GVPDQPSSLS…THLSVSECHR (567 aa)) lie on the Extracellular side of the membrane. A disulfide bridge connects residues Cys31 and Cys37. LRR repeat units lie at residues 54–77 (AVKSLDLSNNKIASVGNSDLWKCV), 78–101 (NLKALRLGSNDINTIEEDSFSSLR), 102–125 (SLEHLDLSNNHLSNLSSSWFRPLS), 126–150 (SLKFLNLLGSTYKTLGETSLFSHLT), 151–175 (NLRILKVGNIHFTEIQGKDFAGLTF), 176–199 (LEELEIDATNLQRYEPKSFKSIQN), 200–223 (ISHLILRMKQPVLLPEIILDTLSS), 224–250 (LEYLELRDTYLNTFHFAEVSDPETNTL), 251–278 (IKKFTFRNVKITDESFDEIVKLLNYISG), 279–308 (VSEAEFDECTLDGLGEFRTPDIDKIKVIGK), 309–337 (LETLTIRRLRIPQFYLFRDLSSIYSLTER), 338–361 (VKRITIENSKVFLVPCSLSRHLKS), 362–388 (LEYLDLSDNLMVEEYLKNSACERAWPS), 389–414 (LQTLILRQNHLTSLGKTGETLLTLKN), 415–437 (LTKLDISKNSFHSMPETCQWPEK), 438–457 (MKYLNLSSIRIDRLTQCIPQ), 458–478 (TLEVLDISNNNLNSFSLILPQ), 479–500 (VKELYISRNKLKTLPDASFLPM), and 501–524 (LLVMRISRKTINTFSKEQLDSFQK). Asn115 carries N-linked (GlcNAc...) asparagine glycosylation. A glycan (N-linked (GlcNAc...) asparagine) is linked at Asn199. A disulfide bridge links Cys353 with Cys382. Asn414 carries an N-linked (GlcNAc...) asparagine glycan. Residues Cys432 and Cys454 are joined by a disulfide bond. A glycan (N-linked (GlcNAc...) asparagine) is linked at Asn442. Residues 525–579 (LKTLEAGGNNFICSCEFLSFTQEEQALDQILIDWPENYLCDSPSHVRGQRVQDTH) form the LRRCT domain. A helical transmembrane segment spans residues 588–608 (TALVSAVCCALFLSILLTGVL). Residues 609-784 (CHHFHGLWYM…WLNLRAAIKS (176 aa)) are Cytoplasmic-facing. One can recognise a TIR domain in the interval 639-782 (ICYDAFVSYS…GFWLNLRAAI (144 aa)). Lys754 participates in a covalent cross-link: Glycyl lysine isopeptide (Lys-Gly) (interchain with G-Cter in ubiquitin). The ATG16L1-binding motif signature appears at 761 to 778 (YLEWPTDEAQQEGFWLNL).

This sequence belongs to the Toll-like receptor family. Interacts with LY96, TLR1 and TLR6 (via extracellular domain). TLR2 seems to exist in heterodimers with either TLR1 or TLR6 before stimulation by the ligand. The heterodimers form bigger oligomers in response to their corresponding ligands as well as further heterotypic associations with other receptors such as CD14 and/or CD36. Binds MYD88 (via TIR domain). Interacts with TICAM1. Interacts with CNPY3. Interacts with ATG16L1. Interacts with PPP1R11. Interacts with TICAM2. Interacts with TIRAP. Ubiquitinated at Lys-754 by PPP1R11, leading to its degradation. Deubiquitinated by USP2. Post-translationally, glycosylation of Asn-442 is critical for secretion of the N-terminal ectodomain of TLR2.

It is found in the membrane. Its subcellular location is the cytoplasmic vesicle. The protein resides in the phagosome membrane. It localises to the membrane raft. Cooperates with LY96 to mediate the innate immune response to bacterial lipoproteins and other microbial cell wall components. Cooperates with TLR1 or TLR6 to mediate the innate immune response to bacterial lipoproteins or lipopeptides. Acts via MYD88 and TRAF6, leading to NF-kappa-B activation, cytokine secretion and the inflammatory response. May also promote apoptosis in response to lipoproteins. Forms activation clusters composed of several receptors depending on the ligand, these clusters trigger signaling from the cell surface and subsequently are targeted to the Golgi in a lipid-raft dependent pathway. Forms the cluster TLR2:TLR6:CD14:CD36 in response to diacylated lipopeptides and TLR2:TLR1:CD14 in response to triacylated lipopeptides. In Equus caballus (Horse), this protein is Toll-like receptor 2 (TLR2).